The following is a 216-amino-acid chain: Somatotropin (216 aa).

Residues 1–26 (MAAGPRTSVLLAFTLLCLPWPQEAGA) form the signal peptide. Residue His-45 participates in Zn(2+) binding. The cysteines at positions 78 and 189 are disulfide-linked. Residue Ser-131 is modified to Phosphoserine. Glu-198 is a binding site for Zn(2+). Residues Cys-206 and Cys-214 are joined by a disulfide bond.

Belongs to the somatotropin/prolactin family.

It localises to the secreted. In terms of biological role, plays an important role in growth control. Its major role in stimulating body growth is to stimulate the liver and other tissues to secrete IGF1. It stimulates both the differentiation and proliferation of myoblasts. It also stimulates amino acid uptake and protein synthesis in muscle and other tissues. This Camelus dromedarius (Dromedary) protein is Somatotropin (GH1).